The chain runs to 378 residues: Deoxyguanosinetriphosphate triphosphohydrolase-like protein (378 aa).

Residues 1–28 (MLAPYACQPGESRGRQQPESMSTFRSPF) are disordered. Polar residues predominate over residues 15-26 (RQQPESMSTFRS). Residues 62 to 198 (RLTHSIEVAQ…AAIADDVAYS (137 aa)) enclose the HD domain.

The protein belongs to the dGTPase family. Type 2 subfamily.

This Cereibacter sphaeroides (strain ATCC 17025 / ATH 2.4.3) (Rhodobacter sphaeroides) protein is Deoxyguanosinetriphosphate triphosphohydrolase-like protein.